The primary structure comprises 29 residues: Brevinin-2Tc (29 aa).

Cysteine 23 and cysteine 29 are disulfide-bonded.

Belongs to the frog skin active peptide (FSAP) family. Brevinin subfamily. In terms of tissue distribution, expressed by the skin glands.

The protein resides in the secreted. In terms of biological role, antibacterial activity against representative Gram-negative and Gram-positive bacteria. This is Brevinin-2Tc from Rana temporaria (European common frog).